We begin with the raw amino-acid sequence, 695 residues long: DUF724 domain-containing protein 3 (695 aa).

The segment at 376 to 464 is disordered; that stretch reads ITVTPLKQQD…GTSDTIRVDD (89 aa). Residues 384 to 402 are compositionally biased toward basic and acidic residues; it reads QDAETEGKKSPKKTPEPVK. Residues 434-459 show a composition bias toward polar residues; that stretch reads NQNSNLNETDETCNVSKAGVNGTSDT. Positions 509-694 constitute a DUF724 domain; that stretch reads PFTKNLPFWK…LEFITSVLAP (186 aa). Residues 614 to 684 are a coiled coil; it reads VEERKCLEKR…TIDQEIANVE (71 aa).

Homodimer.

May be involved in the polar growth of plant cells via transportation of RNAs. The chain is DUF724 domain-containing protein 3 from Arabidopsis thaliana (Mouse-ear cress).